The primary structure comprises 349 residues: S-adenosylmethionine:tRNA ribosyltransferase-isomerase (349 aa).

Belongs to the QueA family. Monomer.

It localises to the cytoplasm. It carries out the reaction 7-aminomethyl-7-carbaguanosine(34) in tRNA + S-adenosyl-L-methionine = epoxyqueuosine(34) in tRNA + adenine + L-methionine + 2 H(+). Its pathway is tRNA modification; tRNA-queuosine biosynthesis. Transfers and isomerizes the ribose moiety from AdoMet to the 7-aminomethyl group of 7-deazaguanine (preQ1-tRNA) to give epoxyqueuosine (oQ-tRNA). This Cupriavidus pinatubonensis (strain JMP 134 / LMG 1197) (Cupriavidus necator (strain JMP 134)) protein is S-adenosylmethionine:tRNA ribosyltransferase-isomerase.